Reading from the N-terminus, the 355-residue chain is UDP-glucose 4-epimerase uge1 (355 aa).

An NAD(+)-binding site is contributed by 8–39 (TVLVTGGAGYIGSHTCVVLLEKGYDVVIVDNL).

Belongs to the NAD(P)-dependent epimerase/dehydratase family. It depends on NAD(+) as a cofactor.

It carries out the reaction UDP-alpha-D-glucose = UDP-alpha-D-galactose. The protein operates within carbohydrate metabolism; galactose metabolism. Major UDP-glucose/-galactose 4-epimerase under glucose-rich conditions involved in protein galactosylation. The sequence is that of UDP-glucose 4-epimerase uge1 (uge1) from Schizosaccharomyces pombe (strain 972 / ATCC 24843) (Fission yeast).